We begin with the raw amino-acid sequence, 465 residues long: UDP-N-acetylmuramate--L-alanine ligase (465 aa).

112-118 is an ATP binding site; it reads GTHGKTT.

It belongs to the MurCDEF family.

It is found in the cytoplasm. It carries out the reaction UDP-N-acetyl-alpha-D-muramate + L-alanine + ATP = UDP-N-acetyl-alpha-D-muramoyl-L-alanine + ADP + phosphate + H(+). Its pathway is cell wall biogenesis; peptidoglycan biosynthesis. Functionally, cell wall formation. This chain is UDP-N-acetylmuramate--L-alanine ligase, found in Burkholderia mallei (strain NCTC 10247).